The chain runs to 66 residues: Sodium/potassium-transporting ATPase subunit gamma (66 aa).

The chain crosses the membrane as a helical span at residues 29–46 (GGLIFAGLAFVVGLLILL).

The protein belongs to the FXYD family. As to quaternary structure, regulatory subunit of the sodium/potassium-transporting ATPase which is composed of a catalytic alpha subunit, an auxiliary non-catalytic beta subunit and an additional regulatory subunit. As to expression, highest levels expressed in the kidney and spleen. Restricted to the basolateral membrane in renal epithelial cells and varies in its level of expression along the nephron.

The protein localises to the membrane. In terms of biological role, may be involved in forming the receptor site for cardiac glycoside binding or may modulate the transport function of the sodium ATPase. This Rattus norvegicus (Rat) protein is Sodium/potassium-transporting ATPase subunit gamma (Fxyd2).